Here is a 711-residue protein sequence, read N- to C-terminus: Toxin RTX-III translocation ATP-binding protein (711 aa).

The Peptidase C39 domain maps to 1–129 (MESQMPFNEK…EIFQGGMILI (129 aa)). The active site involves histidine 87. Residues 158–440 (FVETIIVSIF…LAQLWQDFQQ (283 aa)) enclose the ABC transmembrane type-1 domain. Transmembrane regions (helical) follow at residues 162 to 182 (IIVS…FQVV), 195 to 215 (LNVI…LSGL), 273 to 293 (ALTS…MWYY), 299 to 319 (IVIL…SPIL), and 392 to 412 (VMII…LSIG). Residues 472–707 (IAFKHIRFRY…ENGLYYYLNQ (236 aa)) enclose the ABC transporter domain. Residue 506–513 (GRSGSGKS) coordinates ATP.

It belongs to the ABC transporter superfamily. Protein-1 exporter (TC 3.A.1.109) family. Homodimer.

Its subcellular location is the cell membrane. Its function is as follows. Involved in the transport of the toxin RTX-III. The polypeptide is Toxin RTX-III translocation ATP-binding protein (apxIIIB) (Actinobacillus pleuropneumoniae (Haemophilus pleuropneumoniae)).